A 126-amino-acid chain; its full sequence is Fluoride-specific ion channel FluC (126 aa).

A run of 4 helical transmembrane segments spans residues 5–25, 35–55, 68–88, and 99–119; these read LHFL…WLLG, WGTL…LGLI, ALVT…AEVV, and AAGY…LGLA. Residues glycine 75 and threonine 78 each contribute to the Na(+) site.

Belongs to the fluoride channel Fluc/FEX (TC 1.A.43) family.

Its subcellular location is the cell inner membrane. The enzyme catalyses fluoride(in) = fluoride(out). With respect to regulation, na(+) is not transported, but it plays an essential structural role and its presence is essential for fluoride channel function. In terms of biological role, fluoride-specific ion channel. Important for reducing fluoride concentration in the cell, thus reducing its toxicity. This chain is Fluoride-specific ion channel FluC, found in Bordetella avium (strain 197N).